Reading from the N-terminus, the 196-residue chain is Protein GrpE (196 aa).

Residues 1 to 26 (MQEPHNQEPIEEQKLSEMEDTLEKQH) are compositionally biased toward basic and acidic residues. The segment at 1–40 (MQEPHNQEPIEEQKLSEMEDTLEKQHSGASTENTERAEEG) is disordered.

It belongs to the GrpE family. In terms of assembly, homodimer.

It localises to the cytoplasm. Functionally, participates actively in the response to hyperosmotic and heat shock by preventing the aggregation of stress-denatured proteins, in association with DnaK and GrpE. It is the nucleotide exchange factor for DnaK and may function as a thermosensor. Unfolded proteins bind initially to DnaJ; upon interaction with the DnaJ-bound protein, DnaK hydrolyzes its bound ATP, resulting in the formation of a stable complex. GrpE releases ADP from DnaK; ATP binding to DnaK triggers the release of the substrate protein, thus completing the reaction cycle. Several rounds of ATP-dependent interactions between DnaJ, DnaK and GrpE are required for fully efficient folding. This Nitrosomonas eutropha (strain DSM 101675 / C91 / Nm57) protein is Protein GrpE.